A 165-amino-acid chain; its full sequence is MRTLAIYPGTFDPVTNGHLDIIKRSMEIFDNVIVAVAQSSSKRPMFSLQERIDILKLSTQNLVNVQVEGFCTLLADFAKQKGARMIIRGLRAVSDFEYELQIGYANASLNPELETIYFMPTLENAFISSSVVRSIIEHNGAFSHLVPKNAADFIYSLYTKHKRGM.

Thr10 lines the substrate pocket. Residues 10 to 11 (TF) and His18 each bind ATP. Substrate contacts are provided by Lys42, Leu74, and Arg88. Residues 89-91 (GLR), Glu99, and 124-130 (NAFISSS) contribute to the ATP site.

Belongs to the bacterial CoaD family. As to quaternary structure, homohexamer. Mg(2+) serves as cofactor.

Its subcellular location is the cytoplasm. It carries out the reaction (R)-4'-phosphopantetheine + ATP + H(+) = 3'-dephospho-CoA + diphosphate. Its pathway is cofactor biosynthesis; coenzyme A biosynthesis; CoA from (R)-pantothenate: step 4/5. Reversibly transfers an adenylyl group from ATP to 4'-phosphopantetheine, yielding dephospho-CoA (dPCoA) and pyrophosphate. This chain is Phosphopantetheine adenylyltransferase, found in Helicobacter hepaticus (strain ATCC 51449 / 3B1).